A 952-amino-acid polypeptide reads, in one-letter code: Valine--tRNA ligase (952 aa).

The short motif at proline 45 to histidine 55 is the 'HIGH' region element. The short motif at lysine 571–serine 575 is the 'KMSKS' region element. Lysine 574 contacts ATP. A coiled-coil region spans residues lysine 894 to alanine 950.

It belongs to the class-I aminoacyl-tRNA synthetase family. ValS type 1 subfamily. As to quaternary structure, monomer.

The protein resides in the cytoplasm. It carries out the reaction tRNA(Val) + L-valine + ATP = L-valyl-tRNA(Val) + AMP + diphosphate. Its function is as follows. Catalyzes the attachment of valine to tRNA(Val). As ValRS can inadvertently accommodate and process structurally similar amino acids such as threonine, to avoid such errors, it has a 'posttransfer' editing activity that hydrolyzes mischarged Thr-tRNA(Val) in a tRNA-dependent manner. The polypeptide is Valine--tRNA ligase (Nitrobacter winogradskyi (strain ATCC 25391 / DSM 10237 / CIP 104748 / NCIMB 11846 / Nb-255)).